An 84-amino-acid chain; its full sequence is uncharacterized protein (84 aa).

This is an uncharacterized protein from Helicobacter pylori (strain ATCC 700392 / 26695) (Campylobacter pylori).